A 793-amino-acid chain; its full sequence is Phenylalanine--tRNA ligase beta subunit (793 aa).

One can recognise a tRNA-binding domain in the interval Thr39 to Cys154. In terms of domain architecture, B5 spans Pro403–Ala481. Residues Asp457, Asp463, Glu466, and Glu467 each coordinate Mg(2+). The 97-residue stretch at Pro697–Asp793 folds into the FDX-ACB domain.

This sequence belongs to the phenylalanyl-tRNA synthetase beta subunit family. Type 1 subfamily. As to quaternary structure, tetramer of two alpha and two beta subunits. Requires Mg(2+) as cofactor.

It is found in the cytoplasm. It carries out the reaction tRNA(Phe) + L-phenylalanine + ATP = L-phenylalanyl-tRNA(Phe) + AMP + diphosphate + H(+). The protein is Phenylalanine--tRNA ligase beta subunit of Chlamydia caviae (strain ATCC VR-813 / DSM 19441 / 03DC25 / GPIC) (Chlamydophila caviae).